A 155-amino-acid polypeptide reads, in one-letter code: Large ribosomal subunit protein uL22c (155 aa).

Belongs to the universal ribosomal protein uL22 family. In terms of assembly, part of the 50S ribosomal subunit.

Its subcellular location is the plastid. The protein localises to the chloroplast. Functionally, this protein binds specifically to 23S rRNA. In terms of biological role, the globular domain of the protein is located near the polypeptide exit tunnel on the outside of the subunit, while an extended beta-hairpin is found that lines the wall of the exit tunnel in the center of the 70S ribosome. The sequence is that of Large ribosomal subunit protein uL22c (rpl22) from Nicotiana sylvestris (Wood tobacco).